An 847-amino-acid chain; its full sequence is Alanine--tRNA ligase (847 aa).

4 residues coordinate Zn(2+): His554, His558, Cys656, and His660.

The protein belongs to the class-II aminoacyl-tRNA synthetase family. Requires Zn(2+) as cofactor.

It localises to the cytoplasm. The enzyme catalyses tRNA(Ala) + L-alanine + ATP = L-alanyl-tRNA(Ala) + AMP + diphosphate. Its function is as follows. Catalyzes the attachment of alanine to tRNA(Ala) in a two-step reaction: alanine is first activated by ATP to form Ala-AMP and then transferred to the acceptor end of tRNA(Ala). Also edits incorrectly charged Ser-tRNA(Ala) and Gly-tRNA(Ala) via its editing domain. This chain is Alanine--tRNA ligase, found in Helicobacter pylori (strain Shi470).